The sequence spans 308 residues: Ribosomal RNA small subunit methyltransferase H (308 aa).

S-adenosyl-L-methionine-binding positions include 36–38 (GGH), Asp55, Phe82, Asp103, and Gln110.

This sequence belongs to the methyltransferase superfamily. RsmH family.

The protein localises to the cytoplasm. The enzyme catalyses cytidine(1402) in 16S rRNA + S-adenosyl-L-methionine = N(4)-methylcytidine(1402) in 16S rRNA + S-adenosyl-L-homocysteine + H(+). Specifically methylates the N4 position of cytidine in position 1402 (C1402) of 16S rRNA. The chain is Ribosomal RNA small subunit methyltransferase H from Helicobacter pylori (strain J99 / ATCC 700824) (Campylobacter pylori J99).